We begin with the raw amino-acid sequence, 226 residues long: Isoprenyl transferase (226 aa).

Residue aspartate 12 is part of the active site. Position 12 (aspartate 12) interacts with Mg(2+). Substrate-binding positions include 13-16 (GNAR), tryptophan 17, lysine 25, histidine 29, and 57-59 (SSE). Asparagine 60 acts as the Proton acceptor in catalysis. Residues tryptophan 61, arginine 63, arginine 174, and 180–182 (RIS) each bind substrate. Position 193 (glutamate 193) interacts with Mg(2+).

This sequence belongs to the UPP synthase family. In terms of assembly, homodimer. Mg(2+) serves as cofactor.

Its function is as follows. Catalyzes the condensation of isopentenyl diphosphate (IPP) with allylic pyrophosphates generating different type of terpenoids. The polypeptide is Isoprenyl transferase (Rickettsia bellii (strain RML369-C)).